The following is a 406-amino-acid chain: Phosphatidylinositol 5-phosphate 4-kinase type-2 alpha (406 aa).

Alanine 2 bears the N-acetylalanine mark. At threonine 3 the chain carries Phosphothreonine. Serine 14 carries the phosphoserine modification. The 373-residue stretch at 33 to 405 folds into the PIPK domain; it reads ASDPLLSVLM…RFLDFIGHIL (373 aa). Residues 59 to 65 are required for interaction with PIP5K1A; it reads VMLMPDD. Residues lysine 89 and lysine 145 each carry the N6-acetyllysine modification. Residues 288-329 form a disordered region; the sequence is QEEVECEENDGEEEGESDGTHPVGTPPDSPGNTLNSSPPLAP. Positions 289–304 are enriched in acidic residues; that stretch reads EEVECEENDGEEEGES.

Homodimer. Interacts with PIP4K2B; the interaction may regulate localization to the nucleus. Probably interacts with PIP5K1A; the interaction inhibits PIP5K1A kinase activity. Phosphorylated in tyrosines. Phosphorylation is induced by light and increases kinase activity.

It is found in the cell membrane. It localises to the nucleus. Its subcellular location is the lysosome. The protein localises to the cytoplasm. The protein resides in the photoreceptor inner segment. It is found in the cell projection. It localises to the cilium. Its subcellular location is the photoreceptor outer segment. It catalyses the reaction a 1,2-diacyl-sn-glycero-3-phospho-(1D-myo-inositol-5-phosphate) + ATP = a 1,2-diacyl-sn-glycero-3-phospho-(1D-myo-inositol-4,5-bisphosphate) + ADP + H(+). The enzyme catalyses 1,2-dihexadecanoyl-sn-glycero-3-phospho-(1D-myo-inositol-5-phosphate) + ATP = 1,2-dihexadecanoyl-sn-glycero-3-phospho-(1D-myo-inositol-4,5-bisphosphate) + ADP + H(+). The catalysed reaction is 1,2-dihexadecanoyl-sn-glycero-3-phospho-(1D-myo-inositol-5-phosphate) + GTP = 1,2-dihexadecanoyl-sn-glycero-3-phospho-(1D-myo-inositol-4,5-bisphosphate) + GDP + H(+). Its activity is regulated as follows. In rod outer segments, activated by light. Its function is as follows. Catalyzes the phosphorylation of phosphatidylinositol 5-phosphate (PtdIns5P) on the fourth hydroxyl of the myo-inositol ring, to form phosphatidylinositol 4,5-bisphosphate (PtdIns(4,5)P2). Has both ATP- and GTP-dependent kinase activities. May exert its function by regulating the levels of PtdIns5P, which functions in the cytosol by increasing AKT activity and in the nucleus signals through ING2. May regulate the pool of cytosolic PtdIns5P in response to the activation of tyrosine phosphorylation. May be involved in thrombopoiesis, and the terminal maturation of megakaryocytes and regulation of their size. May negatively regulate insulin-stimulated glucose uptake by lowering the levels of PtdIns5P. The protein is Phosphatidylinositol 5-phosphate 4-kinase type-2 alpha (PIP4K2A) of Sus scrofa (Pig).